The following is a 231-amino-acid chain: Protein PIMREG (231 aa).

A disordered region spans residues 1-44 (MASQWQGMRTSVRRRSLLKEEQLEKKEVTRSAGGHPETGPLGSL). 2 positions are modified to phosphoserine: S11 and S16. 2 short sequence motifs (D-box) span residues 14-17 (RRSL) and 53-56 (PLRA). Over residues 17–29 (LLKEEQLEKKEVT) the composition is skewed to basic and acidic residues. A Phosphoserine modification is found at S72. Disordered regions lie at residues 115–138 (KVRR…QKNT) and 152–197 (HLRL…DLEP). A Phosphoserine; by Uhmk1; in vitro modification is found at S128. Over residues 178 to 190 (PCSSTEPLCSPSE) the composition is skewed to polar residues. Phosphoserine is present on residues S191 and S193.

In terms of assembly, interacts with PICALM; this interaction may target PICALM to the nucleus. During mitosis, associates with HDAC2 and MTA2 subunits of the chromatin-remodeling NuRD complex; this association is strongest at prometaphase and decreases as the cell progresses through metaphase and anaphase. Ubiquitinated by the anaphase-promoting complex/cyclosome (APC/C) complex in the presence of FZR1, leading to its degradation by the proteasome during mitotic exit. However, degradation is not essential for normal mitotic progression within a single cell cycle. Mainly expressed in thymus and ovary. Expressed in all T-cell subpopulations isolated from the thymus, macrophages, pro-erythrocytes, granulocytes, mast cells and progenitor cells.

Its subcellular location is the nucleus. The protein localises to the nucleolus. During mitosis, may play a role in the metaphase-to-anaphase transition. The chain is Protein PIMREG from Mus musculus (Mouse).